The chain runs to 99 residues: Citrate lyase acyl carrier protein (99 aa).

Serine 14 is subject to O-(phosphoribosyl dephospho-coenzyme A)serine.

It belongs to the CitD family. As to quaternary structure, oligomer with a subunit composition of (alpha,beta,gamma)6.

The protein resides in the cytoplasm. In terms of biological role, covalent carrier of the coenzyme of citrate lyase. The sequence is that of Citrate lyase acyl carrier protein from Edwardsiella ictaluri (strain 93-146).